An 81-amino-acid polypeptide reads, in one-letter code: Conotoxin Vc6.7 (81 aa).

A signal peptide spans 1 to 19; the sequence is MEKLTILLLVAAVLMSIQA. Positions 20-44 are excised as a propeptide; sequence VNQEKHQRAKMNLLSKRKPPAERWW. Disulfide bonds link cysteine 49/cysteine 63, cysteine 56/cysteine 67, and cysteine 62/cysteine 72.

It belongs to the conotoxin O2 superfamily. As to expression, expressed by the venom duct.

The protein resides in the secreted. Inhibits voltage-gated ion channels. The sequence is that of Conotoxin Vc6.7 from Conus victoriae (Queen Victoria cone).